Here is a 338-residue protein sequence, read N- to C-terminus: Arginine N-succinyltransferase subunit alpha (338 aa).

It belongs to the succinylarginine dihydrolase family. Heterotetramer of two alpha and two beta subunits.

It catalyses the reaction succinyl-CoA + L-arginine = N(2)-succinyl-L-arginine + CoA + H(+). It participates in amino-acid degradation; L-arginine degradation via AST pathway; L-glutamate and succinate from L-arginine: step 1/5. Catalyzes the transfer of succinyl-CoA to arginine to produce N(2)-succinylarginine. Also acts on L-ornithine. In Pseudomonas aeruginosa (strain ATCC 15692 / DSM 22644 / CIP 104116 / JCM 14847 / LMG 12228 / 1C / PRS 101 / PAO1), this protein is Arginine N-succinyltransferase subunit alpha (astA).